A 121-amino-acid polypeptide reads, in one-letter code: Large ribosomal subunit protein uL18 (121 aa).

This sequence belongs to the universal ribosomal protein uL18 family. Part of the 50S ribosomal subunit; part of the 5S rRNA/L5/L18/L25 subcomplex. Contacts the 5S and 23S rRNAs.

Its function is as follows. This is one of the proteins that bind and probably mediate the attachment of the 5S RNA into the large ribosomal subunit, where it forms part of the central protuberance. This chain is Large ribosomal subunit protein uL18, found in Caldanaerobacter subterraneus subsp. tengcongensis (strain DSM 15242 / JCM 11007 / NBRC 100824 / MB4) (Thermoanaerobacter tengcongensis).